A 237-amino-acid polypeptide reads, in one-letter code: E3 ubiquitin-protein ligase RNF166 (237 aa).

Residues 33–73 (CPICLEVYHRPVAIGSCGHTFCGECLQPCLQVPSPLCPLCR) form an RING-type zinc finger. Zn(2+) contacts are provided by Cys98, Cys101, His113, and Cys117. Residues 98–117 (CRGCNKKVTLAKMRVHISSC) form a C2HC RNF-type zinc finger. The 17-residue stretch at 221–237 (DEEAAFQAALALSLSEN) folds into the UIM domain.

The protein resides in the cytoplasm. The enzyme catalyses S-ubiquitinyl-[E2 ubiquitin-conjugating enzyme]-L-cysteine + [acceptor protein]-L-lysine = [E2 ubiquitin-conjugating enzyme]-L-cysteine + N(6)-ubiquitinyl-[acceptor protein]-L-lysine.. It participates in protein modification; protein ubiquitination. Functionally, E3 ubiquitin-protein ligase that promotes the ubiquitination of different substrates. In turn, participates in different biological processes including interferon production or autophagy. Plays a role in the activation of RNA virus-induced interferon-beta production by promoting the ubiquitination of TRAF3 and TRAF6. Also plays a role in the early recruitment of autophagy adapters to bacteria. Mediates 'Lys-29' and 'Lys-33'-linked ubiquitination of SQSTM1 leading to xenophagic targeting of bacteria and inhibition of their replication. The chain is E3 ubiquitin-protein ligase RNF166 (RNF166) from Homo sapiens (Human).